The sequence spans 96 residues: MAKYEILYIIRPNIEEEAKNALVSRFDSILTDNGATIVESKDWEKRRLAYEINDFREGLYHIVNVESEDAVALNEFDRLAKINGDILRHMIVKLDA.

The protein belongs to the bacterial ribosomal protein bS6 family.

Functionally, binds together with bS18 to 16S ribosomal RNA. This chain is Small ribosomal subunit protein bS6, found in Streptococcus uberis (strain ATCC BAA-854 / 0140J).